The primary structure comprises 359 residues: Peptide chain release factor 1 (359 aa).

The residue at position 238 (Q238) is an N5-methylglutamine.

This sequence belongs to the prokaryotic/mitochondrial release factor family. Post-translationally, methylated by PrmC. Methylation increases the termination efficiency of RF1.

The protein resides in the cytoplasm. Functionally, peptide chain release factor 1 directs the termination of translation in response to the peptide chain termination codons UAG and UAA. The protein is Peptide chain release factor 1 of Rhodococcus jostii (strain RHA1).